A 334-amino-acid polypeptide reads, in one-letter code: MIEADRLISAGVISDEESIDRAIRPKLLAEYVGQPHVREQMEIFIQAAKQRGDALDHVLIFGPPGLGKTTLANIVANEMGVNLRTTSGPVLEKAGDLAAMLTNLEPHDVLFIDEIHRLSPVVEEILYPAMEDYQLDIMIGEGPAARSIKLDLPPFTLIGATTRAGSLTSPLRDRFGIVQRLEFYQVADLEHIVSRSAKCLGLELTPEGAHQLARRSRGTPRITNRLLRRVRDFAEVRADGAINGDVAMKALDMLNVDAEGFDFMDRKLLLAVIDKFMGGPVGLDNLAAAIGEERETIEDVLEPYLIQQGFIQRTPRGRIATNHAYKHFGITREE.

Residues 4 to 184 are large ATPase domain (RuvB-L); it reads ADRLISAGVI…FGIVQRLEFY (181 aa). Residues I23, R24, G65, K68, T69, T70, 131–133, R174, Y184, and R221 contribute to the ATP site; that span reads EDY. A Mg(2+)-binding site is contributed by T69. The segment at 185–255 is small ATPAse domain (RuvB-S); that stretch reads QVADLEHIVS…VAMKALDMLN (71 aa). The head domain (RuvB-H) stretch occupies residues 258-334; it reads AEGFDFMDRK…YKHFGITREE (77 aa). DNA-binding residues include R294, R313, and R318.

Belongs to the RuvB family. As to quaternary structure, homohexamer. Forms an RuvA(8)-RuvB(12)-Holliday junction (HJ) complex. HJ DNA is sandwiched between 2 RuvA tetramers; dsDNA enters through RuvA and exits via RuvB. An RuvB hexamer assembles on each DNA strand where it exits the tetramer. Each RuvB hexamer is contacted by two RuvA subunits (via domain III) on 2 adjacent RuvB subunits; this complex drives branch migration. In the full resolvosome a probable DNA-RuvA(4)-RuvB(12)-RuvC(2) complex forms which resolves the HJ.

The protein localises to the cytoplasm. It catalyses the reaction ATP + H2O = ADP + phosphate + H(+). Its function is as follows. The RuvA-RuvB-RuvC complex processes Holliday junction (HJ) DNA during genetic recombination and DNA repair, while the RuvA-RuvB complex plays an important role in the rescue of blocked DNA replication forks via replication fork reversal (RFR). RuvA specifically binds to HJ cruciform DNA, conferring on it an open structure. The RuvB hexamer acts as an ATP-dependent pump, pulling dsDNA into and through the RuvAB complex. RuvB forms 2 homohexamers on either side of HJ DNA bound by 1 or 2 RuvA tetramers; 4 subunits per hexamer contact DNA at a time. Coordinated motions by a converter formed by DNA-disengaged RuvB subunits stimulates ATP hydrolysis and nucleotide exchange. Immobilization of the converter enables RuvB to convert the ATP-contained energy into a lever motion, pulling 2 nucleotides of DNA out of the RuvA tetramer per ATP hydrolyzed, thus driving DNA branch migration. The RuvB motors rotate together with the DNA substrate, which together with the progressing nucleotide cycle form the mechanistic basis for DNA recombination by continuous HJ branch migration. Branch migration allows RuvC to scan DNA until it finds its consensus sequence, where it cleaves and resolves cruciform DNA. This chain is Holliday junction branch migration complex subunit RuvB, found in Yersinia enterocolitica serotype O:8 / biotype 1B (strain NCTC 13174 / 8081).